Here is a 193-residue protein sequence, read N- to C-terminus: MKIGILALQGAFAEHAKVLDQLGVESVELRNLDDFQQDQSDLSGLILPGGESTTMGKLLRDQNMLLPIREAILSGLPVFGTCAGLILLAKEITSQKESHLGTMDMVVERNAXGRQLGSFYTEAECKGVGKIPMTFIRGPIISSVGEGVEILATVNNQIVAAQEKNMLVSSFHPELTDDVRLHQYFINMCKEKS.

50–52 is a binding site for L-glutamine; sequence GES. Residue cysteine 82 is the Nucleophile of the active site. L-glutamine is bound by residues arginine 109 and 136 to 137; that span reads IR. Active-site charge relay system residues include histidine 172 and glutamate 174.

This sequence belongs to the glutaminase PdxT/SNO family. In terms of assembly, in the presence of PdxS, forms a dodecamer of heterodimers. Only shows activity in the heterodimer.

The catalysed reaction is aldehydo-D-ribose 5-phosphate + D-glyceraldehyde 3-phosphate + L-glutamine = pyridoxal 5'-phosphate + L-glutamate + phosphate + 3 H2O + H(+). The enzyme catalyses L-glutamine + H2O = L-glutamate + NH4(+). The protein operates within cofactor biosynthesis; pyridoxal 5'-phosphate biosynthesis. Functionally, catalyzes the hydrolysis of glutamine to glutamate and ammonia as part of the biosynthesis of pyridoxal 5'-phosphate. The resulting ammonia molecule is channeled to the active site of PdxS. This chain is Pyridoxal 5'-phosphate synthase subunit PdxT, found in Streptococcus pneumoniae serotype 19F (strain G54).